Here is a 676-residue protein sequence, read N- to C-terminus: UvrABC system protein B (676 aa).

One can recognise a Helicase ATP-binding domain in the interval 26 to 414; the sequence is EGLENGLAHQ…SDGEIAEQVV (389 aa). 39–46 provides a ligand contact to ATP; sequence GVTGSGKT. The Beta-hairpin motif lies at 92-115; the sequence is YFDYYQPEAYVPTTDTFIEKDSSV. The 167-residue stretch at 432-598 folds into the Helicase C-terminal domain; sequence QVDDLLSEIR…ALKKDVADIL (167 aa). One can recognise a UVR domain in the interval 636 to 671; that stretch reads EKAIQKLESKMYQHAKDLEFEQAAQVRDEIDNLRKQ.

This sequence belongs to the UvrB family. In terms of assembly, forms a heterotetramer with UvrA during the search for lesions. Interacts with UvrC in an incision complex.

It localises to the cytoplasm. The UvrABC repair system catalyzes the recognition and processing of DNA lesions. A damage recognition complex composed of 2 UvrA and 2 UvrB subunits scans DNA for abnormalities. Upon binding of the UvrA(2)B(2) complex to a putative damaged site, the DNA wraps around one UvrB monomer. DNA wrap is dependent on ATP binding by UvrB and probably causes local melting of the DNA helix, facilitating insertion of UvrB beta-hairpin between the DNA strands. Then UvrB probes one DNA strand for the presence of a lesion. If a lesion is found the UvrA subunits dissociate and the UvrB-DNA preincision complex is formed. This complex is subsequently bound by UvrC and the second UvrB is released. If no lesion is found, the DNA wraps around the other UvrB subunit that will check the other stand for damage. The polypeptide is UvrABC system protein B (Aliivibrio fischeri (strain ATCC 700601 / ES114) (Vibrio fischeri)).